Consider the following 431-residue polypeptide: Tol-Pal system protein TolB (431 aa).

Positions 1–26 are cleaved as a signal peptide; it reads MSLMTKLGFRALVASCLIAAGGAANA. The interval 411–431 is disordered; sequence PQILSVQGGSVREPSWGPFMQ.

This sequence belongs to the TolB family. The Tol-Pal system is composed of five core proteins: the inner membrane proteins TolA, TolQ and TolR, the periplasmic protein TolB and the outer membrane protein Pal. They form a network linking the inner and outer membranes and the peptidoglycan layer.

It localises to the periplasm. In terms of biological role, part of the Tol-Pal system, which plays a role in outer membrane invagination during cell division and is important for maintaining outer membrane integrity. The chain is Tol-Pal system protein TolB from Burkholderia vietnamiensis (strain G4 / LMG 22486) (Burkholderia cepacia (strain R1808)).